A 153-amino-acid chain; its full sequence is Ubiquitin-conjugating enzyme E2 35 (153 aa).

Residues 5-151 (NLPRRIIKET…AKEWTRLYAS (147 aa)) form the UBC core domain. The Glycyl thioester intermediate role is filled by Cys-89.

Belongs to the ubiquitin-conjugating enzyme family. Interacts with yeast and human Mms2, with the RING domain of RGLG2 and with UEV1A, UEV1B, UEV1C and UEV1D. Ubiquitously expressed at low level. Mainly expressed in the vasculature.

It catalyses the reaction S-ubiquitinyl-[E1 ubiquitin-activating enzyme]-L-cysteine + [E2 ubiquitin-conjugating enzyme]-L-cysteine = [E1 ubiquitin-activating enzyme]-L-cysteine + S-ubiquitinyl-[E2 ubiquitin-conjugating enzyme]-L-cysteine.. It participates in protein modification; protein ubiquitination. Functionally, catalyzes the synthesis of non-canonical poly-ubiquitin chains that are linked through 'Lys-63'. This type of poly-ubiquitination does not lead to protein degradation by the proteasome. Mediates transcriptional activation of target genes. Required for postreplication repair of UV-damaged DNA and for adapting root developmental programs to suboptimal availability of iron. The sequence is that of Ubiquitin-conjugating enzyme E2 35 (UBC35) from Arabidopsis thaliana (Mouse-ear cress).